Reading from the N-terminus, the 147-residue chain is Large ribosomal subunit protein bL21 (147 aa).

Positions 125 to 147 (EEVEAAPKAKKAAPKAKKEATKE) are disordered.

Belongs to the bacterial ribosomal protein bL21 family. Part of the 50S ribosomal subunit. Contacts protein L20.

In terms of biological role, this protein binds to 23S rRNA in the presence of protein L20. The protein is Large ribosomal subunit protein bL21 of Flavobacterium johnsoniae (strain ATCC 17061 / DSM 2064 / JCM 8514 / BCRC 14874 / CCUG 350202 / NBRC 14942 / NCIMB 11054 / UW101) (Cytophaga johnsonae).